The sequence spans 221 residues: Deoxyribose-phosphate aldolase (221 aa).

Asp90 acts as the Proton donor/acceptor in catalysis. Lys152 (schiff-base intermediate with acetaldehyde) is an active-site residue. The Proton donor/acceptor role is filled by Lys181.

It belongs to the DeoC/FbaB aldolase family. DeoC type 1 subfamily.

It is found in the cytoplasm. The catalysed reaction is 2-deoxy-D-ribose 5-phosphate = D-glyceraldehyde 3-phosphate + acetaldehyde. It participates in carbohydrate degradation; 2-deoxy-D-ribose 1-phosphate degradation; D-glyceraldehyde 3-phosphate and acetaldehyde from 2-deoxy-alpha-D-ribose 1-phosphate: step 2/2. Catalyzes a reversible aldol reaction between acetaldehyde and D-glyceraldehyde 3-phosphate to generate 2-deoxy-D-ribose 5-phosphate. In Exiguobacterium sibiricum (strain DSM 17290 / CCUG 55495 / CIP 109462 / JCM 13490 / 255-15), this protein is Deoxyribose-phosphate aldolase.